Here is a 398-residue protein sequence, read N- to C-terminus: NADH dehydrogenase [ubiquinone] iron-sulfur protein 2 (398 aa).

Residues cysteine 261, cysteine 267, and cysteine 282 each contribute to the [4Fe-4S] cluster site.

The protein belongs to the complex I 49 kDa subunit family. In terms of assembly, complex I is composed of about 45 different subunits. This is a component of the iron-sulfur (IP) fragment of the enzyme. It depends on [4Fe-4S] cluster as a cofactor.

It localises to the mitochondrion. The catalysed reaction is a ubiquinone + NADH + 5 H(+)(in) = a ubiquinol + NAD(+) + 4 H(+)(out). Its function is as follows. Core subunit of the mitochondrial membrane respiratory chain NADH dehydrogenase (Complex I) that is believed to belong to the minimal assembly required for catalysis. Complex I functions in the transfer of electrons from NADH to the respiratory chain. The immediate electron acceptor for the enzyme is believed to be ubiquinone. Component of the iron-sulfur (IP) fragment of the enzyme. The protein is NADH dehydrogenase [ubiquinone] iron-sulfur protein 2 (NAD7) of Nephroselmis olivacea (Green alga).